Here is a 325-residue protein sequence, read N- to C-terminus: Elongation factor P--(R)-beta-lysine ligase (325 aa).

Position 76 to 78 (76 to 78 (SPE)) interacts with substrate. ATP-binding positions include 100 to 102 (RNE) and N109. Y118 is a binding site for substrate. An ATP-binding site is contributed by 244 to 245 (EL). Substrate is bound at residue E251. G300 lines the ATP pocket.

Belongs to the class-II aminoacyl-tRNA synthetase family. EpmA subfamily. As to quaternary structure, homodimer.

It catalyses the reaction D-beta-lysine + L-lysyl-[protein] + ATP = N(6)-((3R)-3,6-diaminohexanoyl)-L-lysyl-[protein] + AMP + diphosphate + H(+). With EpmB is involved in the beta-lysylation step of the post-translational modification of translation elongation factor P (EF-P). Catalyzes the ATP-dependent activation of (R)-beta-lysine produced by EpmB, forming a lysyl-adenylate, from which the beta-lysyl moiety is then transferred to the epsilon-amino group of a conserved specific lysine residue in EF-P. The polypeptide is Elongation factor P--(R)-beta-lysine ligase (Erwinia tasmaniensis (strain DSM 17950 / CFBP 7177 / CIP 109463 / NCPPB 4357 / Et1/99)).